The primary structure comprises 572 residues: Proline--tRNA ligase (572 aa).

The protein belongs to the class-II aminoacyl-tRNA synthetase family. ProS type 1 subfamily. Homodimer.

Its subcellular location is the cytoplasm. The enzyme catalyses tRNA(Pro) + L-proline + ATP = L-prolyl-tRNA(Pro) + AMP + diphosphate. Its function is as follows. Catalyzes the attachment of proline to tRNA(Pro) in a two-step reaction: proline is first activated by ATP to form Pro-AMP and then transferred to the acceptor end of tRNA(Pro). As ProRS can inadvertently accommodate and process non-cognate amino acids such as alanine and cysteine, to avoid such errors it has two additional distinct editing activities against alanine. One activity is designated as 'pretransfer' editing and involves the tRNA(Pro)-independent hydrolysis of activated Ala-AMP. The other activity is designated 'posttransfer' editing and involves deacylation of mischarged Ala-tRNA(Pro). The misacylated Cys-tRNA(Pro) is not edited by ProRS. This is Proline--tRNA ligase from Enterococcus faecalis (strain ATCC 700802 / V583).